The sequence spans 388 residues: P2X purinoceptor 4 (388 aa).

The Cytoplasmic segment spans residues M1–R33. Residues A34–Y54 form a helical membrane-spanning segment. Topologically, residues Q55–N338 are extracellular. Residues K67 and K69 each coordinate ATP. Residues K67 and K69 each coordinate CTP. N75 and N110 each carry an N-linked (GlcNAc...) asparagine glycan. Intrachain disulfides connect C116-C165, C126-C149, and C132-C159. N153 and N184 each carry an N-linked (GlcNAc...) asparagine glycan. ATP is bound by residues T186 and L188. T186 serves as a coordination point for CTP. N-linked (GlcNAc...) asparagine glycans are attached at residues N199 and N208. 2 disulfide bridges follow: C217/C227 and C261/C270. Residues N293, R295, and K313 each contribute to the ATP site. CTP is bound by residues N293, R295, and K313. A helical membrane pass occupies residues I339 to Y359. The Cytoplasmic portion of the chain corresponds to C360 to Q388.

This sequence belongs to the P2X receptor family. In terms of assembly, functional P2RXs are organized as homomeric and heteromeric trimers. Forms heterotrimer with P2RX1. Interacts with P2RX7 (via C-terminus); this interaction is functional only in the presence of ATP. Forms heterotrimer with P2RX4; functional differences between homomeric P2RX4 and P2RX4/6 heterotrimer are minor. Interacts with AP1M2.

It is found in the cell membrane. Its subcellular location is the lysosome membrane. It catalyses the reaction K(+)(in) = K(+)(out). The catalysed reaction is Na(+)(in) = Na(+)(out). The enzyme catalyses Ca(2+)(in) = Ca(2+)(out). Activated by ATP. pH-dependent and inhibited by acidic pH. Its function is as follows. ATP-gated nonselective transmembrane cation channel permeable to potassium, sodium and calcium. CTP, but not GTP or UTP, functions as a weak affinity agonist for P2RX4. Activated by extracellularly released ATP, it plays multiple role in immunity and central nervous system physiology. Plays a key role in initial steps of T-cell activation and Ca(2+) microdomain formation. Also participates in basal T-cell activity without TCR/CD3 stimulation. Promotes the differentiation and activation of Th17 cells via expression of retinoic acid-related orphan receptor C/RORC. Upon activation, drives microglia motility via the PI3K/Akt pathway. Could also function as an ATP-gated cation channel of lysosomal membranes. In Homo sapiens (Human), this protein is P2X purinoceptor 4 (P2RX4).